Reading from the N-terminus, the 687-residue chain is DNA-directed RNA polymerase subunit beta' (687 aa).

The Zn(2+) site is built by Cys69, Cys71, Cys87, and Cys90. Positions 493, 495, and 497 each coordinate Mg(2+).

Belongs to the RNA polymerase beta' chain family. RpoC1 subfamily. As to quaternary structure, in plastids the minimal PEP RNA polymerase catalytic core is composed of four subunits: alpha, beta, beta', and beta''. When a (nuclear-encoded) sigma factor is associated with the core the holoenzyme is formed, which can initiate transcription. It depends on Mg(2+) as a cofactor. Zn(2+) is required as a cofactor.

It localises to the plastid. It is found in the chloroplast. It catalyses the reaction RNA(n) + a ribonucleoside 5'-triphosphate = RNA(n+1) + diphosphate. Its function is as follows. DNA-dependent RNA polymerase catalyzes the transcription of DNA into RNA using the four ribonucleoside triphosphates as substrates. The polypeptide is DNA-directed RNA polymerase subunit beta' (Angiopteris evecta (Mule's foot fern)).